The primary structure comprises 85 residues: Neurotoxin BmKAEP2 (85 aa).

The first 21 residues, 1-21, serve as a signal peptide directing secretion; it reads MKLFLLLVISASMLIDGLVNA. In terms of domain architecture, LCN-type CS-alpha/beta spans 22–82; that stretch reads DGYIRGSNGC…TWKSESNTCG (61 aa). Disulfide bonds link C31–C81, C35–C56, C42–C63, and C46–C65.

It belongs to the long (4 C-C) scorpion toxin superfamily. Sodium channel inhibitor family. Beta subfamily. As to expression, expressed by the venom gland.

It is found in the secreted. Its function is as follows. Depressant insect beta-toxins cause a transient contraction paralysis followed by a slow flaccid paralysis. They bind voltage-independently at site-4 of sodium channels (Nav) and shift the voltage of activation toward more negative potentials thereby affecting sodium channel activation and promoting spontaneous and repetitive firing. This toxin is active only on insects. Has potential anti-epilepsy effect. The chain is Neurotoxin BmKAEP2 from Olivierus martensii (Manchurian scorpion).